The following is a 321-amino-acid chain: Serine protease 52 (321 aa).

An N-terminal signal peptide occupies residues 1–27; the sequence is MKRWKDRRTGLLLPLVLLLFGACSSLA. Residues 56 to 287 form the Peptidase S1 domain; it reads IVGGKPANIL…YVRWISKQTA (232 aa). C81 and C97 are oxidised to a cystine. Residues H96 and D142 each act as charge relay system in the active site. N153 carries an N-linked (GlcNAc...) asparagine glycan. 3 cysteine pairs are disulfide-bonded: C175–C242, C208–C221, and C232–C263. The active-site Charge relay system is the S236. A helical membrane pass occupies residues 300 to 320; the sequence is ACPLVLSCRAILFLYFVMFLL.

It belongs to the peptidase S1 family.

The protein localises to the membrane. Functionally, probable serine protease. In Mus musculus (Mouse), this protein is Serine protease 52 (Prss52).